The chain runs to 531 residues: UDP-glucuronosyltransferase 2B13 (531 aa).

The first 24 residues, M1–C24, serve as a signal peptide directing secretion. N-linked (GlcNAc...) asparagine glycosylation is found at N69, N101, and N317. A helical transmembrane segment spans residues V495–V511.

The protein belongs to the UDP-glycosyltransferase family.

It is found in the microsome membrane. The protein resides in the endoplasmic reticulum membrane. It catalyses the reaction glucuronate acceptor + UDP-alpha-D-glucuronate = acceptor beta-D-glucuronoside + UDP + H(+). Its function is as follows. UDPGT is of major importance in the conjugation and subsequent elimination of potentially toxic xenobiotics and endogenous compounds. Acts on small phenolic agents such as 2-beta-naphthol and 4-methylumbelliferone as well as bulky phenolic compounds like 2-hydroxy- and 4-hydroxybiphenyl. In contrast to 2B16 it is active toward octylgallate. In Oryctolagus cuniculus (Rabbit), this protein is UDP-glucuronosyltransferase 2B13 (UGT2B13).